A 239-amino-acid chain; its full sequence is Ribosomal RNA small subunit methyltransferase G (239 aa).

Residues G77, F82, 128 to 129 (AE), and R146 each bind S-adenosyl-L-methionine. Residues 215 to 239 (DKKRQTPKKYPRKPGTPNKTPLLEK) are disordered.

The protein belongs to the methyltransferase superfamily. RNA methyltransferase RsmG family.

The protein resides in the cytoplasm. Its function is as follows. Specifically methylates the N7 position of guanine in position 535 of 16S rRNA. The protein is Ribosomal RNA small subunit methyltransferase G of Staphylococcus aureus (strain USA300).